The following is a 163-amino-acid chain: Phosphopantetheine adenylyltransferase (163 aa).

Serine 11 is a substrate binding site. ATP is bound by residues 11-12 (SF) and histidine 19. The substrate site is built by lysine 43, alanine 76, and arginine 90. ATP is bound by residues 91 to 93 (GLR), glutamate 101, and 126 to 132 (WQALSSS).

This sequence belongs to the bacterial CoaD family. As to quaternary structure, homohexamer. The cofactor is Mg(2+).

It is found in the cytoplasm. The enzyme catalyses (R)-4'-phosphopantetheine + ATP + H(+) = 3'-dephospho-CoA + diphosphate. The protein operates within cofactor biosynthesis; coenzyme A biosynthesis; CoA from (R)-pantothenate: step 4/5. Reversibly transfers an adenylyl group from ATP to 4'-phosphopantetheine, yielding dephospho-CoA (dPCoA) and pyrophosphate. This Streptococcus pyogenes serotype M2 (strain MGAS10270) protein is Phosphopantetheine adenylyltransferase.